We begin with the raw amino-acid sequence, 336 residues long: Glyceraldehyde-3-phosphate dehydrogenase, plasmid (336 aa).

NAD(+) is bound by residues 12 to 13 (RI), Asp-37, Arg-81, and Ser-123. D-glyceraldehyde 3-phosphate is bound by residues 154 to 156 (SCT) and Thr-185. The Nucleophile role is filled by Cys-155. Asn-186 provides a ligand contact to NAD(+). Residues Arg-200, 213-214 (TG), and Arg-236 contribute to the D-glyceraldehyde 3-phosphate site. Asn-317 contacts NAD(+).

This sequence belongs to the glyceraldehyde-3-phosphate dehydrogenase family. In terms of assembly, homotetramer.

The enzyme catalyses D-glyceraldehyde 3-phosphate + phosphate + NAD(+) = (2R)-3-phospho-glyceroyl phosphate + NADH + H(+). The protein operates within carbohydrate biosynthesis; Calvin cycle. Functionally, could be involved in carbon fixation as a component of the Calvin cycle. Catalyzes the oxidative phosphorylation of glyceraldehyde 3-phosphate (G3P) to 1,3-bisphosphoglycerate (BPG) using the cofactor NAD. The first reaction step involves the formation of a hemiacetal intermediate between G3P and a cysteine residue, and this hemiacetal intermediate is then oxidized to a thioester, with concomitant reduction of NAD to NADH. The reduced NADH is then exchanged with the second NAD, and the thioester is attacked by a nucleophilic inorganic phosphate to produce BPG. The sequence is that of Glyceraldehyde-3-phosphate dehydrogenase, plasmid (cbbGP) from Cupriavidus necator (strain ATCC 17699 / DSM 428 / KCTC 22496 / NCIMB 10442 / H16 / Stanier 337) (Ralstonia eutropha).